A 1067-amino-acid chain; its full sequence is Glycine--tRNA ligase, chloroplastic/mitochondrial 2 (1067 aa).

The N-terminal 50 residues, 1-50 (MAILHFSLPLIVSFLRPHASPRFFLLPRSLSQSPFLSRRRFHRTSAVSSA), are a transit peptide targeting the chloroplast and mitochondrion. E513 provides a ligand contact to substrate. ATP-binding positions include 589–596 (RNSGINIE), 619–624 (LVVPQN), 744–745 (RL), and 859–862 (GLRR). 624–628 (NLLNE) provides a ligand contact to substrate. 855–859 (NDPFG) is a binding site for substrate.

This sequence belongs to the class-II aminoacyl-tRNA synthetase family. As to quaternary structure, homodimer.

Its subcellular location is the plastid. It localises to the chloroplast. The protein resides in the mitochondrion. It carries out the reaction tRNA(Gly) + glycine + ATP = glycyl-tRNA(Gly) + AMP + diphosphate. Its function is as follows. Catalyzes the attachment of glycine to tRNA(Gly). Is also able produce diadenosine tetraphosphate (Ap4A), a universal pleiotropic signaling molecule needed for cell regulation pathways, by direct condensation of 2 ATPs. This chain is Glycine--tRNA ligase, chloroplastic/mitochondrial 2, found in Arabidopsis thaliana (Mouse-ear cress).